A 318-amino-acid polypeptide reads, in one-letter code: Peroxisomal targeting signal 2 receptor (318 aa).

WD repeat units lie at residues 60-91 (DWND…QLWD), 104-136 (EHTQ…KVWD), 148-179 (GHES…RIWD), 191-222 (AHQT…RGWD), 235-266 (GHTY…RFWN), and 279-310 (HHTE…KIYD).

The protein belongs to the WD repeat peroxin-7 family. As to quaternary structure, interacts with PEX5; interaction only takes place when PEX7 is associated with cargo proteins. Interacts with VWA8.

The protein localises to the cytoplasm. It is found in the cytosol. The protein resides in the peroxisome matrix. Its function is as follows. Receptor required for the peroxisomal import of proteins containing a C-terminal PTS2-type peroxisomal targeting signal. Specifically binds to cargo proteins containing a PTS2 peroxisomal targeting signal in the cytosol. Cargo protein-binding triggers interaction with PEX5 and formation of a ternary complex composed of PEX5 and PEX7 along with PTS2-containing cargo proteins, which is tranlocated into peroxisomes by passing through the PEX13-PEX14 docking complex. The protein is Peroxisomal targeting signal 2 receptor of Mus musculus (Mouse).